The chain runs to 2637 residues: Nonribisomal peptide synthetase valB (2637 aa).

Residues 1 to 376 (MADGADYTQR…KALIRSPPST (376 aa)) are condensation 1. The interval 413–803 (SQASRRPDAA…VGRRDNQIKL (391 aa)) is adenylation 1. A Carrier 1 domain is found at 946–1022 (PPANPPERAL…EAASEIKEPT (77 aa)). At Ser983 the chain carries O-(pantetheine 4'-phosphoryl)serine. A disordered region spans residues 1016 to 1045 (SEIKEPTDASAPSPSPISRDLPLQKSNHDR). Residues 1063 to 1506 (VEAIYPCTAL…LSRADMSLLQ (444 aa)) are condensation 2. An adenylation 2 region spans residues 1524-1933 (AREVAHQRPL…EGRKDTRVKL (410 aa)). One can recognise a Carrier 2 domain in the interval 2078–2154 (KEVTDDQAFM…YMVSKTSVSN (77 aa)). Position 2115 is an O-(pantetheine 4'-phosphoryl)serine (Ser2115). Residues 2193–2582 (ESVAPATDAQ…LWMGAYLDAA (390 aa)) form a condensation 3 region.

This sequence belongs to the NRP synthetase family.

Its pathway is secondary metabolite biosynthesis. Its function is as follows. Nonribisomal peptide synthetase; part of the gene cluster that mediates the biosynthesis of valactamides. The first step of the pathway is performed by the highly reducing polyketide synthase valA that produces the polyketide part of the final products. An acetyl starter unit is incorporated by the ketosynthase domain of valA, and subsequently 6 malonyl-CoA-derived ketide units are incorporated and fully reduced to their respective alkane forms by the action of the ketoreductase, dehydratase, and enoylreductase domains (except for the penultimate unit, which is reduced only to the alkene). The final five ketide units are each proposed to be alpha-methylated by the methyltransferase domain before ketone reduction by the ketoreductase domain. The C1 domain of the nonribisomal peptide synthetase valB then catalyzes amide bond formation between the heptaketide chain and L-valine (L-Val) attached to the T1 domain. The C2 domain incorporating L-isoleucine (L-Ile) then carries out chain elongation, which is followed by macrolactonization by the Ct domain to release the final product. In Aspergillus terreus, this protein is Nonribisomal peptide synthetase valB.